Here is a 100-residue protein sequence, read N- to C-terminus: Small ribosomal subunit protein uS14 (100 aa).

Belongs to the universal ribosomal protein uS14 family. Part of the 30S ribosomal subunit. Contacts proteins S3 and S10.

Functionally, binds 16S rRNA, required for the assembly of 30S particles and may also be responsible for determining the conformation of the 16S rRNA at the A site. The protein is Small ribosomal subunit protein uS14 of Synechococcus sp. (strain CC9902).